Here is a 239-residue protein sequence, read N- to C-terminus: Purine nucleoside phosphorylase DeoD-type (239 aa).

His-5 provides a ligand contact to a purine D-ribonucleoside. Residues Gly-21, Arg-25, Arg-44, and 88-91 each bind phosphate; that span reads RIGS. A purine D-ribonucleoside is bound by residues 180–182 and 204–205; these read EME and TD. Asp-205 serves as the catalytic Proton donor.

Belongs to the PNP/UDP phosphorylase family. Homohexamer; trimer of homodimers.

The catalysed reaction is a purine D-ribonucleoside + phosphate = a purine nucleobase + alpha-D-ribose 1-phosphate. It catalyses the reaction a purine 2'-deoxy-D-ribonucleoside + phosphate = a purine nucleobase + 2-deoxy-alpha-D-ribose 1-phosphate. Catalyzes the reversible phosphorolytic breakdown of the N-glycosidic bond in the beta-(deoxy)ribonucleoside molecules, with the formation of the corresponding free purine bases and pentose-1-phosphate. The polypeptide is Purine nucleoside phosphorylase DeoD-type (Aliivibrio fischeri (strain ATCC 700601 / ES114) (Vibrio fischeri)).